The primary structure comprises 435 residues: Adenylosuccinate synthetase (435 aa).

Residues 22-28 (GDEGKGK) and 50-52 (GHT) each bind GTP. The Proton acceptor role is filled by Asp-23. Mg(2+) is bound by residues Asp-23 and Gly-50. Residues 23–26 (DEGK), 48–51 (NAGH), Thr-140, Arg-154, Gln-235, Thr-250, and Arg-314 contribute to the IMP site. His-51 acts as the Proton donor in catalysis. 310–316 (ATTGRKR) is a binding site for substrate. Residues Arg-316, 342–344 (KLD), and 424–426 (SVG) contribute to the GTP site.

It belongs to the adenylosuccinate synthetase family. Homodimer. Mg(2+) is required as a cofactor.

Its subcellular location is the cytoplasm. The catalysed reaction is IMP + L-aspartate + GTP = N(6)-(1,2-dicarboxyethyl)-AMP + GDP + phosphate + 2 H(+). It participates in purine metabolism; AMP biosynthesis via de novo pathway; AMP from IMP: step 1/2. Its function is as follows. Plays an important role in the de novo pathway of purine nucleotide biosynthesis. Catalyzes the first committed step in the biosynthesis of AMP from IMP. The protein is Adenylosuccinate synthetase of Chlorobaculum tepidum (strain ATCC 49652 / DSM 12025 / NBRC 103806 / TLS) (Chlorobium tepidum).